The sequence spans 338 residues: Tetraacyldisaccharide 4'-kinase (338 aa).

67 to 74 (IAGGAGKT) contacts ATP.

It belongs to the LpxK family.

It catalyses the reaction a lipid A disaccharide + ATP = a lipid IVA + ADP + H(+). The protein operates within glycolipid biosynthesis; lipid IV(A) biosynthesis; lipid IV(A) from (3R)-3-hydroxytetradecanoyl-[acyl-carrier-protein] and UDP-N-acetyl-alpha-D-glucosamine: step 6/6. In terms of biological role, transfers the gamma-phosphate of ATP to the 4'-position of a tetraacyldisaccharide 1-phosphate intermediate (termed DS-1-P) to form tetraacyldisaccharide 1,4'-bis-phosphate (lipid IVA). This is Tetraacyldisaccharide 4'-kinase from Acidovorax ebreus (strain TPSY) (Diaphorobacter sp. (strain TPSY)).